Reading from the N-terminus, the 583-residue chain is Aspartate--tRNA ligase (583 aa).

Residue glutamate 174 participates in L-aspartate binding. An aspartate region spans residues 198–201 (QITK). Residue arginine 220 coordinates L-aspartate. ATP contacts are provided by residues 220–222 (RDE) and glutamine 229. Histidine 443 is a binding site for L-aspartate. Glutamate 477 serves as a coordination point for ATP. Arginine 484 contributes to the L-aspartate binding site. 529–532 (GLDR) contributes to the ATP binding site.

Belongs to the class-II aminoacyl-tRNA synthetase family. Type 1 subfamily. As to quaternary structure, homodimer.

The protein localises to the cytoplasm. The catalysed reaction is tRNA(Asp) + L-aspartate + ATP = L-aspartyl-tRNA(Asp) + AMP + diphosphate. In terms of biological role, catalyzes the attachment of L-aspartate to tRNA(Asp) in a two-step reaction: L-aspartate is first activated by ATP to form Asp-AMP and then transferred to the acceptor end of tRNA(Asp). This chain is Aspartate--tRNA ligase, found in Streptococcus thermophilus (strain CNRZ 1066).